The sequence spans 877 residues: Bifunctional uridylyltransferase/uridylyl-removing enzyme (877 aa).

The uridylyltransferase stretch occupies residues 1–335 (MDGPNSDRAH…HRDDAFSPTP (335 aa)). The interval 336-695 (VNDHFQAVND…LRPESLRGSV (360 aa)) is uridylyl-removing. Positions 454-576 (VDEHTLFVVR…VRNQNTLNHL (123 aa)) constitute an HD domain. 2 ACT domains span residues 696 to 778 (EVFI…AVSR) and 805 to 877 (ILEL…VGDQ).

It belongs to the GlnD family. Mg(2+) serves as cofactor.

The enzyme catalyses [protein-PII]-L-tyrosine + UTP = [protein-PII]-uridylyl-L-tyrosine + diphosphate. It catalyses the reaction [protein-PII]-uridylyl-L-tyrosine + H2O = [protein-PII]-L-tyrosine + UMP + H(+). With respect to regulation, uridylyltransferase (UTase) activity is inhibited by glutamine, while glutamine activates uridylyl-removing (UR) activity. Modifies, by uridylylation and deuridylylation, the PII regulatory proteins (GlnB and homologs), in response to the nitrogen status of the cell that GlnD senses through the glutamine level. Under low glutamine levels, catalyzes the conversion of the PII proteins and UTP to PII-UMP and PPi, while under higher glutamine levels, GlnD hydrolyzes PII-UMP to PII and UMP (deuridylylation). Thus, controls uridylylation state and activity of the PII proteins, and plays an important role in the regulation of nitrogen fixation and metabolism. In Methylococcus capsulatus (strain ATCC 33009 / NCIMB 11132 / Bath), this protein is Bifunctional uridylyltransferase/uridylyl-removing enzyme.